We begin with the raw amino-acid sequence, 233 residues long: 3,4-dihydroxy-2-butanone 4-phosphate synthase (233 aa).

Glu37 is a Mg(2+) binding site. Residue Glu37 coordinates Mn(2+). Asp41 serves as a coordination point for D-ribulose 5-phosphate. An S-glutathionyl cysteine modification is found at Cys66. D-ribulose 5-phosphate-binding positions include Thr92 and 150-154; that span reads RRGHT. His153 lines the Mg(2+) pocket. His153 provides a ligand contact to Mn(2+).

As to quaternary structure, homodimer. The cofactor is Mg(2+). Mn(2+) serves as cofactor. In terms of processing, S-glutathionylation is reversible and dependent on a glutaredoxin.

The catalysed reaction is D-ribulose 5-phosphate = (2S)-2-hydroxy-3-oxobutyl phosphate + formate + H(+). Its pathway is cofactor biosynthesis; riboflavin biosynthesis; 2-hydroxy-3-oxobutyl phosphate from D-ribulose 5-phosphate: step 1/1. In terms of biological role, catalyzes the conversion of D-ribulose 5-phosphate to formate and 3,4-dihydroxy-2-butanone 4-phosphate. This Pyricularia oryzae (strain 70-15 / ATCC MYA-4617 / FGSC 8958) (Rice blast fungus) protein is 3,4-dihydroxy-2-butanone 4-phosphate synthase (RIB3).